A 220-amino-acid polypeptide reads, in one-letter code: Phosphoribosylformylglycinamidine synthase subunit PurQ (220 aa).

The Glutamine amidotransferase type-1 domain maps to 2–220 (RVGVVVFPGS…LRSVLAGAKV (219 aa)). The active-site Nucleophile is the cysteine 85. Active-site residues include histidine 193 and glutamate 195.

Part of the FGAM synthase complex composed of 1 PurL, 1 PurQ and 2 PurS subunits.

It localises to the cytoplasm. The catalysed reaction is N(2)-formyl-N(1)-(5-phospho-beta-D-ribosyl)glycinamide + L-glutamine + ATP + H2O = 2-formamido-N(1)-(5-O-phospho-beta-D-ribosyl)acetamidine + L-glutamate + ADP + phosphate + H(+). The enzyme catalyses L-glutamine + H2O = L-glutamate + NH4(+). The protein operates within purine metabolism; IMP biosynthesis via de novo pathway; 5-amino-1-(5-phospho-D-ribosyl)imidazole from N(2)-formyl-N(1)-(5-phospho-D-ribosyl)glycinamide: step 1/2. In terms of biological role, part of the phosphoribosylformylglycinamidine synthase complex involved in the purines biosynthetic pathway. Catalyzes the ATP-dependent conversion of formylglycinamide ribonucleotide (FGAR) and glutamine to yield formylglycinamidine ribonucleotide (FGAM) and glutamate. The FGAM synthase complex is composed of three subunits. PurQ produces an ammonia molecule by converting glutamine to glutamate. PurL transfers the ammonia molecule to FGAR to form FGAM in an ATP-dependent manner. PurS interacts with PurQ and PurL and is thought to assist in the transfer of the ammonia molecule from PurQ to PurL. This is Phosphoribosylformylglycinamidine synthase subunit PurQ from Rubrobacter xylanophilus (strain DSM 9941 / JCM 11954 / NBRC 16129 / PRD-1).